The following is a 469-amino-acid chain: Probable indole-3-acetic acid-amido synthetase GH3.13 (469 aa).

The tract at residues 1 to 26 (MTSTSSENAPDHDHDHDASSPAPATA) is disordered. Residues 9 to 18 (APDHDHDHDA) show a composition bias toward basic and acidic residues.

It belongs to the IAA-amido conjugating enzyme family.

Functionally, may catalyze the synthesis of indole-3-acetic acid (IAA)-amino acid conjugates, providing a mechanism for the plant to cope with the presence of excess auxin. The sequence is that of Probable indole-3-acetic acid-amido synthetase GH3.13 (GH3.13) from Oryza sativa subsp. japonica (Rice).